We begin with the raw amino-acid sequence, 644 residues long: Probable potassium transport system protein Kup (644 aa).

The next 12 membrane-spanning stretches (helical) occupy residues 10–30, 56–76, 106–126, 143–163, 175–195, 212–232, 252–272, 282–302, 343–363, 371–391, 403–423, and 425–445; these read GGAT…GDIG, ILSL…AWVI, WWIL…GVIT, PAWK…LFMV, FGPS…TWIV, FFGI…LAVT, AWYF…GALL, PFFM…SGIA, IYLP…ILWF, FAYG…VFFV, AGLF…ANLL, and FVEG…TMST.

The protein belongs to the HAK/KUP transporter (TC 2.A.72) family.

The protein resides in the cell inner membrane. The catalysed reaction is K(+)(in) + H(+)(in) = K(+)(out) + H(+)(out). Functionally, transport of potassium into the cell. Likely operates as a K(+):H(+) symporter. The sequence is that of Probable potassium transport system protein Kup from Acidithiobacillus ferrooxidans (strain ATCC 23270 / DSM 14882 / CIP 104768 / NCIMB 8455) (Ferrobacillus ferrooxidans (strain ATCC 23270)).